The primary structure comprises 497 residues: Protein adenylyltransferase Fic (497 aa).

The tract at residues 1–30 (MGATDQALEAESKTTEPPKTPPVPEQHDRP) is disordered. A helical transmembrane segment spans residues 38–58 (LCHLLVLLFSGGLAAITLHIF). TPR repeat units lie at residues 123 to 156 (ALGA…APRH) and 157 to 191 (PTVL…SPSN). An Inhibitory (S/T)XXXE(G/N) motif motif is present at residues 248-253 (TVGIEG). ATP is bound by residues E252 and 333-336 (VGGH). The region spanning 302 to 437 (ITIKDILELH…IRPFVRFIAD (136 aa)) is the Fido domain. The active site involves H380. ATP contacts are provided by residues 384-391 (DGNGRTSR), 416-417 (YY), and N424. The segment at 468–497 (GEGVPQLQSSQMGGGASIPEFHESGSGSLP) is disordered.

It belongs to the fic family. As to quaternary structure, homodimer.

It localises to the membrane. The enzyme catalyses L-tyrosyl-[protein] + ATP = O-(5'-adenylyl)-L-tyrosyl-[protein] + diphosphate. It carries out the reaction L-threonyl-[protein] + ATP = 3-O-(5'-adenylyl)-L-threonyl-[protein] + diphosphate. It catalyses the reaction 3-O-(5'-adenylyl)-L-threonyl-[protein] + H2O = L-threonyl-[protein] + AMP + H(+). With respect to regulation, the side chain of Glu-252 determines which of the two opposing activities (AMPylase or de-AMPylase) will take place. In response to endoplasmic reticulum stress, mediates de-AMPylase activity. Adenylyltransferase activity is inhibited by the inhibitory helix present at the N-terminus: Glu-252 binds ATP and competes with ATP-binding at Arg-391, thereby preventing adenylyltransferase activity. In unstressed cells, disengagement of Glu-252 promotes adenylyltransferase activity. Activation dissociates ATP-binding from Glu-252, allowing ordered binding of the entire ATP moiety with the alpha-phosphate in an orientation that is productive for accepting an incoming target hydroxyl side chain. Protein that can both mediate the addition of adenosine 5'-monophosphate (AMP) to specific residues of target proteins (AMPylation), and the removal of the same modification from target proteins (de-AMPylation), depending on the context. The side chain of Glu-252 determines which of the two opposing activities (AMPylase or de-AMPylase) will take place. Acts as a key regulator of the unfolded protein response (UPR) by mediating AMPylation or de-AMPylation of Hsc70-3/BiP. In unstressed cells, acts as an adenylyltransferase by mediating AMPylation of Hsc70-3/BiP at 'Thr-518', thereby inactivating it. In response to endoplasmic reticulum stress, acts as a phosphodiesterase by mediating removal of ATP (de-AMPylation) from Hsc70-3/BiP at 'Thr-518', leading to restore HSPA5/BiP activity. In Drosophila ananassae (Fruit fly), this protein is Protein adenylyltransferase Fic.